The sequence spans 483 residues: Adenylyltransferase and sulfurtransferase uba4 (483 aa).

ATP-binding positions include glycine 100, aspartate 121, 128-132 (SNLHR), lysine 145, and 178-179 (DN). Zn(2+) contacts are provided by cysteine 227 and cysteine 230. The active-site Glycyl thioester intermediate; for adenylyltransferase activity is the cysteine 244. Residues cysteine 306 and cysteine 309 each coordinate Zn(2+). The 116-residue stretch at 366–481 (ISKEPTIIDV…WREQIDPDWP (116 aa)) folds into the Rhodanese domain. Cysteine 436 (cysteine persulfide intermediate; for sulfurtransferase activity) is an active-site residue.

In the N-terminal section; belongs to the HesA/MoeB/ThiF family. UBA4 subfamily. Zn(2+) is required as a cofactor.

The protein localises to the cytoplasm. It is found in the cytosol. The catalysed reaction is [molybdopterin-synthase sulfur-carrier protein]-C-terminal Gly-Gly + ATP + H(+) = [molybdopterin-synthase sulfur-carrier protein]-C-terminal Gly-Gly-AMP + diphosphate. It catalyses the reaction [molybdopterin-synthase sulfur-carrier protein]-C-terminal Gly-Gly-AMP + S-sulfanyl-L-cysteinyl-[cysteine desulfurase] + AH2 = [molybdopterin-synthase sulfur-carrier protein]-C-terminal-Gly-aminoethanethioate + L-cysteinyl-[cysteine desulfurase] + A + AMP + 2 H(+). It functions in the pathway tRNA modification; 5-methoxycarbonylmethyl-2-thiouridine-tRNA biosynthesis. Functionally, plays a central role in 2-thiolation of mcm(5)S(2)U at tRNA wobble positions of cytosolic tRNA(Lys), tRNA(Glu) and tRNA(Gln). Also essential during biosynthesis of the molybdenum cofactor. Acts by mediating the C-terminal thiocarboxylation of sulfur carriers urm1 and mocs2a. Its N-terminus first activates urm1 and mocs2a as acyl-adenylates (-COAMP), then the persulfide sulfur on the catalytic cysteine is transferred to urm1 and mocs2a to form thiocarboxylation (-COSH) of their C-terminus. The reaction probably involves hydrogen sulfide that is generated from the persulfide intermediate and that acts as a nucleophile towards urm1 and mocs2a. Subsequently, a transient disulfide bond is formed. Does not use thiosulfate as sulfur donor; nfs1 probably acting as a sulfur donor for thiocarboxylation reactions. The sequence is that of Adenylyltransferase and sulfurtransferase uba4 from Neosartorya fischeri (strain ATCC 1020 / DSM 3700 / CBS 544.65 / FGSC A1164 / JCM 1740 / NRRL 181 / WB 181) (Aspergillus fischerianus).